A 363-amino-acid polypeptide reads, in one-letter code: Protein-glutamate methylesterase/protein-glutamine glutaminase of group 3 operon (363 aa).

Positions 7 to 124 (RVLIVDDSAS…RQALMESSGR (118 aa)) constitute a Response regulatory domain. Aspartate 58 is subject to 4-aspartylphosphate. Residues 166 to 357 (PTTERIVCIG…REIMAWQQAK (192 aa)) enclose the CheB-type methylesterase domain. Active-site residues include serine 177, histidine 203, and aspartate 299.

It belongs to the CheB family. Phosphorylated by CheA. Phosphorylation of the N-terminal regulatory domain activates the methylesterase activity.

It is found in the cytoplasm. It carries out the reaction [protein]-L-glutamate 5-O-methyl ester + H2O = L-glutamyl-[protein] + methanol + H(+). The enzyme catalyses L-glutaminyl-[protein] + H2O = L-glutamyl-[protein] + NH4(+). In terms of biological role, involved in chemotaxis. Part of a chemotaxis signal transduction system that modulates chemotaxis in response to various stimuli. Catalyzes the demethylation of specific methylglutamate residues introduced into the chemoreceptors (methyl-accepting chemotaxis proteins or MCP) by CheR. Also mediates the irreversible deamidation of specific glutamine residues to glutamic acid. The protein is Protein-glutamate methylesterase/protein-glutamine glutaminase of group 3 operon of Rhodopseudomonas palustris (strain ATCC BAA-98 / CGA009).